Here is a 293-residue protein sequence, read N- to C-terminus: 4-hydroxy-tetrahydrodipicolinate synthase (293 aa).

T47 is a binding site for pyruvate. Residue Y136 is the Proton donor/acceptor of the active site. K164 serves as the catalytic Schiff-base intermediate with substrate. I206 provides a ligand contact to pyruvate.

The protein belongs to the DapA family. Homotetramer; dimer of dimers.

It is found in the cytoplasm. It catalyses the reaction L-aspartate 4-semialdehyde + pyruvate = (2S,4S)-4-hydroxy-2,3,4,5-tetrahydrodipicolinate + H2O + H(+). Its pathway is amino-acid biosynthesis; L-lysine biosynthesis via DAP pathway; (S)-tetrahydrodipicolinate from L-aspartate: step 3/4. Functionally, catalyzes the condensation of (S)-aspartate-beta-semialdehyde [(S)-ASA] and pyruvate to 4-hydroxy-tetrahydrodipicolinate (HTPA). This is 4-hydroxy-tetrahydrodipicolinate synthase from Listeria monocytogenes serotype 4b (strain CLIP80459).